Here is a 160-residue protein sequence, read N- to C-terminus: Cyclic pyranopterin monophosphate synthase (160 aa).

Substrate contacts are provided by residues 77–79 (LCH) and 114–115 (ME). D129 is an active-site residue.

This sequence belongs to the MoaC family. In terms of assembly, homohexamer; trimer of dimers.

The catalysed reaction is (8S)-3',8-cyclo-7,8-dihydroguanosine 5'-triphosphate = cyclic pyranopterin phosphate + diphosphate. It functions in the pathway cofactor biosynthesis; molybdopterin biosynthesis. In terms of biological role, catalyzes the conversion of (8S)-3',8-cyclo-7,8-dihydroguanosine 5'-triphosphate to cyclic pyranopterin monophosphate (cPMP). The chain is Cyclic pyranopterin monophosphate synthase from Alcanivorax borkumensis (strain ATCC 700651 / DSM 11573 / NCIMB 13689 / SK2).